The primary structure comprises 158 residues: NADH-quinone oxidoreductase subunit B (158 aa).

[4Fe-4S] cluster is bound by residues cysteine 37, cysteine 38, cysteine 102, and cysteine 132.

Belongs to the complex I 20 kDa subunit family. As to quaternary structure, NDH-1 is composed of 14 different subunits. Subunits NuoB, C, D, E, F, and G constitute the peripheral sector of the complex. [4Fe-4S] cluster is required as a cofactor.

The protein localises to the cell inner membrane. It catalyses the reaction a quinone + NADH + 5 H(+)(in) = a quinol + NAD(+) + 4 H(+)(out). Functionally, NDH-1 shuttles electrons from NADH, via FMN and iron-sulfur (Fe-S) centers, to quinones in the respiratory chain. The immediate electron acceptor for the enzyme in this species is believed to be ubiquinone. Couples the redox reaction to proton translocation (for every two electrons transferred, four hydrogen ions are translocated across the cytoplasmic membrane), and thus conserves the redox energy in a proton gradient. The sequence is that of NADH-quinone oxidoreductase subunit B from Thioalkalivibrio sulfidiphilus (strain HL-EbGR7).